The chain runs to 434 residues: Adenylosuccinate synthetase (434 aa).

Residues 11 to 17 (GDEGKGK) and 39 to 41 (GHT) contribute to the GTP site. The Proton acceptor role is filled by Asp-12. Mg(2+)-binding residues include Asp-12 and Gly-39. IMP-binding positions include 12–15 (DEGK), 37–40 (NAGH), Thr-134, Arg-148, Asn-230, Thr-245, and Arg-309. His-40 functions as the Proton donor in the catalytic mechanism. 305–311 (VTTGRKR) is a substrate binding site. GTP contacts are provided by residues Arg-311, 337-339 (KLD), and 419-421 (GTG).

It belongs to the adenylosuccinate synthetase family. In terms of assembly, homodimer. The cofactor is Mg(2+).

The protein localises to the cytoplasm. It catalyses the reaction IMP + L-aspartate + GTP = N(6)-(1,2-dicarboxyethyl)-AMP + GDP + phosphate + 2 H(+). The protein operates within purine metabolism; AMP biosynthesis via de novo pathway; AMP from IMP: step 1/2. Its function is as follows. Plays an important role in the de novo pathway and in the salvage pathway of purine nucleotide biosynthesis. Catalyzes the first committed step in the biosynthesis of AMP from IMP. The polypeptide is Adenylosuccinate synthetase (Lachancea thermotolerans (strain ATCC 56472 / CBS 6340 / NRRL Y-8284) (Yeast)).